Consider the following 428-residue polypeptide: Adenosylhomocysteinase (428 aa).

Substrate-binding residues include T62, D134, and E159. Residue 160–162 (TTT) participates in NAD(+) binding. Substrate is bound by residues K189 and D193. Residues N194, 223 to 228 (GYGWCG), E246, N281, 302 to 304 (SGH), and N349 each bind NAD(+).

It belongs to the adenosylhomocysteinase family. NAD(+) serves as cofactor.

It localises to the cytoplasm. It catalyses the reaction S-adenosyl-L-homocysteine + H2O = L-homocysteine + adenosine. It participates in amino-acid biosynthesis; L-homocysteine biosynthesis; L-homocysteine from S-adenosyl-L-homocysteine: step 1/1. In terms of biological role, may play a key role in the regulation of the intracellular concentration of adenosylhomocysteine. This chain is Adenosylhomocysteinase, found in Gloeobacter violaceus (strain ATCC 29082 / PCC 7421).